The following is a 175-amino-acid chain: Large ribosomal subunit protein uL10 (175 aa).

It belongs to the universal ribosomal protein uL10 family. As to quaternary structure, part of the ribosomal stalk of the 50S ribosomal subunit. The N-terminus interacts with L11 and the large rRNA to form the base of the stalk. The C-terminus forms an elongated spine to which L12 dimers bind in a sequential fashion forming a multimeric L10(L12)X complex.

Forms part of the ribosomal stalk, playing a central role in the interaction of the ribosome with GTP-bound translation factors. This Xylella fastidiosa (strain M12) protein is Large ribosomal subunit protein uL10.